Reading from the N-terminus, the 591-residue chain is A-type ATP synthase subunit A (591 aa).

233–240 (GPFGSGKT) contributes to the ATP binding site.

This sequence belongs to the ATPase alpha/beta chains family. In terms of assembly, has multiple subunits with at least A(3), B(3), C, D, E, F, H, I and proteolipid K(x).

The protein resides in the cell membrane. The catalysed reaction is ATP + H2O + 4 H(+)(in) = ADP + phosphate + 5 H(+)(out). Its function is as follows. Component of the A-type ATP synthase that produces ATP from ADP in the presence of a proton gradient across the membrane. The A chain is the catalytic subunit. This is A-type ATP synthase subunit A from Metallosphaera sedula (strain ATCC 51363 / DSM 5348 / JCM 9185 / NBRC 15509 / TH2).